Consider the following 251-residue polypeptide: Triosephosphate isomerase (251 aa).

Residue asparagine 9 to lysine 11 participates in substrate binding. Catalysis depends on histidine 96, which acts as the Electrophile. Residue glutamate 167 is the Proton acceptor of the active site. Residues glycine 173, serine 213, and glycine 234–glycine 235 each bind substrate.

This sequence belongs to the triosephosphate isomerase family. As to quaternary structure, homodimer.

The protein resides in the cytoplasm. The catalysed reaction is D-glyceraldehyde 3-phosphate = dihydroxyacetone phosphate. The protein operates within carbohydrate biosynthesis; gluconeogenesis. It participates in carbohydrate degradation; glycolysis; D-glyceraldehyde 3-phosphate from glycerone phosphate: step 1/1. Involved in the gluconeogenesis. Catalyzes stereospecifically the conversion of dihydroxyacetone phosphate (DHAP) to D-glyceraldehyde-3-phosphate (G3P). The protein is Triosephosphate isomerase of Bacteroides fragilis (strain ATCC 25285 / DSM 2151 / CCUG 4856 / JCM 11019 / LMG 10263 / NCTC 9343 / Onslow / VPI 2553 / EN-2).